The following is a 901-amino-acid chain: HTH-type transcriptional regulator MalT (901 aa).

39–46 (SPAGYGKT) contacts ATP. The HTH luxR-type domain maps to 829–894 (ELIRTSPLTQ…DAVQHAQQLL (66 aa)). Residues 853–872 (NEQIAGELAVAATTIKTHIR) constitute a DNA-binding region (H-T-H motif).

It belongs to the MalT family. In terms of assembly, monomer in solution. Oligomerizes to an active state in the presence of the positive effectors ATP and maltotriose.

With respect to regulation, activated by ATP and maltotriose, which are both required for DNA binding. Positively regulates the transcription of the maltose regulon whose gene products are responsible for uptake and catabolism of malto-oligosaccharides. Specifically binds to the promoter region of its target genes, recognizing a short DNA motif called the MalT box. The polypeptide is HTH-type transcriptional regulator MalT (Enterobacter sp. (strain 638)).